Reading from the N-terminus, the 159-residue chain is ATP synthase subunit b 2 (159 aa).

The helical transmembrane segment at M1–M21 threads the bilayer.

It belongs to the ATPase B chain family. In terms of assembly, F-type ATPases have 2 components, F(1) - the catalytic core - and F(0) - the membrane proton channel. F(1) has five subunits: alpha(3), beta(3), gamma(1), delta(1), epsilon(1). F(0) has three main subunits: a(1), b(2) and c(10-14). The alpha and beta chains form an alternating ring which encloses part of the gamma chain. F(1) is attached to F(0) by a central stalk formed by the gamma and epsilon chains, while a peripheral stalk is formed by the delta and b chains.

It is found in the cell inner membrane. F(1)F(0) ATP synthase produces ATP from ADP in the presence of a proton or sodium gradient. F-type ATPases consist of two structural domains, F(1) containing the extramembraneous catalytic core and F(0) containing the membrane proton channel, linked together by a central stalk and a peripheral stalk. During catalysis, ATP synthesis in the catalytic domain of F(1) is coupled via a rotary mechanism of the central stalk subunits to proton translocation. Its function is as follows. Component of the F(0) channel, it forms part of the peripheral stalk, linking F(1) to F(0). The chain is ATP synthase subunit b 2 from Chelativorans sp. (strain BNC1).